A 342-amino-acid polypeptide reads, in one-letter code: uncharacterized protein (342 aa).

Residues I3–I173 form the MurNAc-LAA domain.

To C.perfringens CPE1502.

This is an uncharacterized protein from Clostridium perfringens.